We begin with the raw amino-acid sequence, 441 residues long: Methylenetetrahydrofolate--tRNA-(uracil-5-)-methyltransferase TrmFO (441 aa).

7–12 contributes to the FAD binding site; that stretch reads GAGLSG.

It belongs to the MnmG family. TrmFO subfamily. FAD is required as a cofactor.

The protein localises to the cytoplasm. It carries out the reaction uridine(54) in tRNA + (6R)-5,10-methylene-5,6,7,8-tetrahydrofolate + NADH + H(+) = 5-methyluridine(54) in tRNA + (6S)-5,6,7,8-tetrahydrofolate + NAD(+). The catalysed reaction is uridine(54) in tRNA + (6R)-5,10-methylene-5,6,7,8-tetrahydrofolate + NADPH + H(+) = 5-methyluridine(54) in tRNA + (6S)-5,6,7,8-tetrahydrofolate + NADP(+). In terms of biological role, catalyzes the folate-dependent formation of 5-methyl-uridine at position 54 (M-5-U54) in all tRNAs. In Pseudothermotoga lettingae (strain ATCC BAA-301 / DSM 14385 / NBRC 107922 / TMO) (Thermotoga lettingae), this protein is Methylenetetrahydrofolate--tRNA-(uracil-5-)-methyltransferase TrmFO.